We begin with the raw amino-acid sequence, 516 residues long: Endoglucanase 20 (516 aa).

An N-terminal signal peptide occupies residues 1-23 (MAAGMVATMVLLTCLAAGGLVVG). N-linked (GlcNAc...) asparagine glycosylation occurs at N83. Catalysis depends on D93, which acts as the Nucleophile. Catalysis depends on residues H416, D468, and E477.

This sequence belongs to the glycosyl hydrolase 9 (cellulase E) family.

It localises to the secreted. It catalyses the reaction Endohydrolysis of (1-&gt;4)-beta-D-glucosidic linkages in cellulose, lichenin and cereal beta-D-glucans.. This is Endoglucanase 20 (GLU15) from Oryza sativa subsp. japonica (Rice).